We begin with the raw amino-acid sequence, 261 residues long: tRNA pseudouridine synthase A (261 aa).

Residue aspartate 51 is the Nucleophile of the active site. Substrate is bound at residue tyrosine 109.

This sequence belongs to the tRNA pseudouridine synthase TruA family. As to quaternary structure, homodimer.

The catalysed reaction is uridine(38/39/40) in tRNA = pseudouridine(38/39/40) in tRNA. Functionally, formation of pseudouridine at positions 38, 39 and 40 in the anticodon stem and loop of transfer RNAs. This is tRNA pseudouridine synthase A from Shewanella amazonensis (strain ATCC BAA-1098 / SB2B).